Here is a 295-residue protein sequence, read N- to C-terminus: Pyridoxal 5'-phosphate synthase subunit PdxS (295 aa).

Asp-25 is a D-ribose 5-phosphate binding site. Catalysis depends on Lys-82, which acts as the Schiff-base intermediate with D-ribose 5-phosphate. Gly-154 contributes to the D-ribose 5-phosphate binding site. Arg-166 contributes to the D-glyceraldehyde 3-phosphate binding site. D-ribose 5-phosphate is bound by residues Gly-215 and 236–237 (GS).

This sequence belongs to the PdxS/SNZ family. In the presence of PdxT, forms a dodecamer of heterodimers.

It catalyses the reaction aldehydo-D-ribose 5-phosphate + D-glyceraldehyde 3-phosphate + L-glutamine = pyridoxal 5'-phosphate + L-glutamate + phosphate + 3 H2O + H(+). It functions in the pathway cofactor biosynthesis; pyridoxal 5'-phosphate biosynthesis. Its function is as follows. Catalyzes the formation of pyridoxal 5'-phosphate from ribose 5-phosphate (RBP), glyceraldehyde 3-phosphate (G3P) and ammonia. The ammonia is provided by the PdxT subunit. Can also use ribulose 5-phosphate and dihydroxyacetone phosphate as substrates, resulting from enzyme-catalyzed isomerization of RBP and G3P, respectively. The protein is Pyridoxal 5'-phosphate synthase subunit PdxS of Heliobacterium modesticaldum (strain ATCC 51547 / Ice1).